The primary structure comprises 89 residues: Small ribosomal subunit protein uS15 (89 aa).

Positions Met-1 to Ala-25 are disordered. Residues Lys-8–Ala-25 are compositionally biased toward polar residues.

This sequence belongs to the universal ribosomal protein uS15 family. In terms of assembly, part of the 30S ribosomal subunit. Forms a bridge to the 50S subunit in the 70S ribosome, contacting the 23S rRNA.

Its function is as follows. One of the primary rRNA binding proteins, it binds directly to 16S rRNA where it helps nucleate assembly of the platform of the 30S subunit by binding and bridging several RNA helices of the 16S rRNA. In terms of biological role, forms an intersubunit bridge (bridge B4) with the 23S rRNA of the 50S subunit in the ribosome. This chain is Small ribosomal subunit protein uS15, found in Synechococcus sp. (strain CC9902).